The sequence spans 401 residues: O-methyltransferase mfmE (401 aa).

Residues 243–244 (GG) and aspartate 268 contribute to the S-adenosyl-L-methionine site. The active-site Proton acceptor is histidine 308.

Belongs to the class I-like SAM-binding methyltransferase superfamily. Cation-independent O-methyltransferase family. COMT subfamily.

It participates in secondary metabolite biosynthesis; terpenoid biosynthesis. O-methyltransferase; part of the gene cluster that mediates the biosynthesis of the phthalide-terpenoid hybrid 11'-O-desmethylfendlerol. Within the pathway, mfmE catalyzes the 7-O-methylation of the phthalide 5,7-dihydroxy-4-(hydroxymethyl)-6-methylphthalide to yield 5-hydroxy-4-(hydroxymethyl)-7-methoxy-6-methylphthalide. The biosynthesis of 11'-O-desmethylfendlerol begins with the NR-PKS mfmB that forms 3,5-dimethylorsellinic acid (DMOA), which is then transformed into the phthalide 5,7-dihydroxy-4-(hydroxymethyl)-6-methylphthalide by the cytochrome P450 monooxygenase mfmA and the hydrolase mfmC. Subsequently, the methyltransferase mfmE catalyzes 7-O-methylation to yield 5-hydroxy-4-(hydroxymethyl)-7-methoxy-6-methylphthalide, which undergoes C-3 hydroxylation by the cytochrome P450 monooxygenase mfmF. The resultant cyclopolic acid (2,5-dihydroxy-4-(hydroxymethyl)-7-methoxy-6-methylphthalide) is then farnesylated by the DMATS-type prenyltransferase mfmD to afford 5-O-farnesylcyclopolic acid. Finally, the Pyr4-family terpene cyclase mfmH cyclizes the farnesyl moiety of 5-O-farnesylcyclopolic acid into a drimane-like structure, thus completing the biosynthesis of 11'-O-desmethylfendlerol. This Annulohypoxylon moriforme (Filamentous fungus) protein is O-methyltransferase mfmE.